The following is a 331-amino-acid chain: Ornithine carbamoyltransferase (331 aa).

Carbamoyl phosphate is bound by residues 55–58, Q82, R106, and 133–136; these read STRT and HPTQ. L-ornithine is bound by residues N166, D230, and 234–235; that span reads SM. Carbamoyl phosphate is bound by residues 272–273 and R317; that span reads CL.

Belongs to the aspartate/ornithine carbamoyltransferase superfamily. OTCase family.

The protein resides in the cytoplasm. It catalyses the reaction carbamoyl phosphate + L-ornithine = L-citrulline + phosphate + H(+). It participates in amino-acid biosynthesis; L-arginine biosynthesis; L-arginine from L-ornithine and carbamoyl phosphate: step 1/3. In terms of biological role, reversibly catalyzes the transfer of the carbamoyl group from carbamoyl phosphate (CP) to the N(epsilon) atom of ornithine (ORN) to produce L-citrulline. The polypeptide is Ornithine carbamoyltransferase (argF) (Neisseria meningitidis serogroup A / serotype 4A (strain DSM 15465 / Z2491)).